A 269-amino-acid polypeptide reads, in one-letter code: Gene 51 glycoprotein (269 aa).

N53, N58, N74, and N78 each carry an N-linked (GlcNAc...) asparagine; by host glycan. Disordered regions lie at residues 67–87 (LSTS…TTPY) and 103–137 (MLNS…ASKN). Residues 76 to 87 (TSNTSYSQTTPY) are compositionally biased toward low complexity. Residues 103–112 (MLNSTPNKPL) are compositionally biased toward polar residues. The segment covering 113 to 136 (SSTKLTPKSQSSSQSTKTTKQASK) has biased composition (low complexity). N-linked (GlcNAc...) asparagine; by host glycosylation is found at N137, N161, N170, and N191.

This is Gene 51 glycoprotein (51) from Saimiriine herpesvirus 2 (strain 11) (SaHV-2).